A 156-amino-acid chain; its full sequence is Glutamate-rich protein 2 (156 aa).

2 disordered regions span residues 29–66 (LQDI…TQAP) and 116–156 (EKTQ…EDGS). Acidic residues-rich tracts occupy residues 39-56 (SAED…DDED) and 140-156 (SDEE…EDGS).

In Homo sapiens (Human), this protein is Glutamate-rich protein 2 (ERICH2).